We begin with the raw amino-acid sequence, 2295 residues long: Protein DOP1B (2295 aa).

Phosphoserine occurs at positions 556 and 597. Disordered regions lie at residues 574 to 599, 651 to 684, 1034 to 1059, and 1092 to 1136; these read AGDE…SSPE, GEEN…DPKP, CKEA…QFTT, and DLPD…LQDL. The segment covering 1111–1131 has biased composition (polar residues); the sequence is ADTSSGHTDSENTSTFSSPSH. Serine 1167 is modified (phosphoserine).

The protein belongs to the DOP1 family. In terms of assembly, homooligomer. Heterotrimer with ATP9A and MON2; this interaction is retromer-independent. Interacts with SNX3. As to expression, expressed in liver, heart and brain.

It is found in the early endosome membrane. The protein resides in the golgi apparatus membrane. Functionally, may play a role in regulating membrane trafficking of cargo proteins. Together with ATP9A and MON2, regulates SNX3 retromer-mediated endosomal sorting of WLS away from lysosomal degradation. In Mus musculus (Mouse), this protein is Protein DOP1B (Dop1b).